Here is a 485-residue protein sequence, read N- to C-terminus: Cobyric acid synthase (485 aa).

The region spanning 248-435 (RLKVAVAVPP…LHGLFESPAA (188 aa)) is the GATase cobBQ-type domain. The active-site Nucleophile is cysteine 329. Histidine 427 is a catalytic residue.

Belongs to the CobB/CobQ family. CobQ subfamily.

It participates in cofactor biosynthesis; adenosylcobalamin biosynthesis. Its function is as follows. Catalyzes amidations at positions B, D, E, and G on adenosylcobyrinic A,C-diamide. NH(2) groups are provided by glutamine, and one molecule of ATP is hydrogenolyzed for each amidation. The chain is Cobyric acid synthase from Azotobacter vinelandii (strain DJ / ATCC BAA-1303).